We begin with the raw amino-acid sequence, 476 residues long: Adenosylhomocysteinase (476 aa).

Substrate-binding residues include T67, D142, and E202. Residue 203–205 participates in NAD(+) binding; sequence TTT. Residues K232 and D236 each contribute to the substrate site. NAD(+) is bound by residues N237, 266–271, E289, N324, 345–347, and N390; these read GYGDVG and IGH.

This sequence belongs to the adenosylhomocysteinase family. Requires NAD(+) as cofactor.

The protein resides in the cytoplasm. It catalyses the reaction S-adenosyl-L-homocysteine + H2O = L-homocysteine + adenosine. It functions in the pathway amino-acid biosynthesis; L-homocysteine biosynthesis; L-homocysteine from S-adenosyl-L-homocysteine: step 1/1. In terms of biological role, may play a key role in the regulation of the intracellular concentration of adenosylhomocysteine. The protein is Adenosylhomocysteinase of Prochlorococcus marinus (strain MIT 9211).